We begin with the raw amino-acid sequence, 478 residues long: Ribosome biogenesis protein NOP53 (478 aa).

Positions 1–10 are enriched in gly residues; that stretch reads MAAGGSGVGG. Residues 1–51 form a disordered region; it reads MAAGGSGVGGKRSSKSDADSGFLGLRPTSVDPALRRRRRGPRNKKRGWRRL. Alanine 2 bears the N-acetylalanine mark. Serine 29 is subject to Phosphoserine. Residues 35 to 49 show a composition bias toward basic residues; it reads RRRRRGPRNKKRGWR. Residues serine 93 and serine 305 each carry the phosphoserine modification. Residues 148–431 are mediates interaction with CDKN2A/isoform tumor suppressor ARF; sequence KEQLWEKLAK…SELTDSLRTL (284 aa). Positions 181–478 are mediates interaction with NF2; the sequence is KPGPQDTVER…EKRAFREIQL (298 aa). The interval 303 to 344 is disordered; the sequence is EESDGEGEPGQGEGPEAGDAEVCPTPARLATTEKKTEQQRRR. Over residues 333–342 the composition is skewed to basic and acidic residues; that stretch reads TTEKKTEQQR. The segment at 342 to 386 is mediates interaction with human herpesvirus 8 protein ORF16; that stretch reads RRREKAVHRLRVQQAALRAARLRHQELFRLRGIKAQVALRLAELA. Nucleolar localization signal regions lie at residues 347–395 and 396–478; these read AVHR…RQAR and REAE…EIQL.

This sequence belongs to the NOP53 family. In terms of assembly, homooligomer. Interacts with PTEN; regulates PTEN phosphorylation and increases its stability. Interacts with RPL11; retains RPL11 into the nucleolus. Interacts with CDKN2A/isoform tumor suppressor ARF; the interaction is direct and promotes ARF nucleoplasmic relocalization and ubiquitin-mediated proteasomal degradation. Interacts with NPM1; the interaction is direct and competitive with MYC. Interacts with NF2 (via FERM domain); the interaction is direct. Interacts with p53/TP53 (via the oligomerization region); the interaction is direct and may prevent the MDM2-mediated proteasomal degradation of p53/TP53. Interacts with RIGI; may regulate RIGI through USP15-mediated 'Lys-63'-linked deubiquitination. Interacts with UBTF. As to quaternary structure, (Microbial infection) Interacts with herpes simplex virus 1 early proteins ICP22 and ICP0. (Microbial infection) Interacts with Human herpesvirus 8 protein ORF16; may sequester ORF16 in host nucleolus and reduce its antiapoptotic activity. Post-translationally, ubiquitin-mediated proteasomal degradation is regulated by c-JUN. It is associated with relocalization to the nucleoplasm and decreased homooligomerization. In terms of processing, phosphorylated upon DNA damage probably by ATM and DNA-PK; may regulate NOP53 degradation. In terms of tissue distribution, expressed at high levels in heart and pancreas, moderate levels in placenta, liver, skeletal muscle, and kidney, and low levels in brain and lung.

The protein localises to the nucleus. It is found in the nucleolus. The protein resides in the nucleoplasm. Its function is as follows. Nucleolar protein which is involved in the integration of the 5S RNP into the ribosomal large subunit during ribosome biogenesis. In ribosome biogenesis, may also play a role in rRNA transcription. Also functions as a nucleolar sensor that regulates the activation of p53/TP53 in response to ribosome biogenesis perturbation, DNA damage and other stress conditions. DNA damage or perturbation of ribosome biogenesis disrupt the interaction between NOP53 and RPL11 allowing RPL11 transport to the nucleoplasm where it can inhibit MDM2 and allow p53/TP53 activation. It may also positively regulate the function of p53/TP53 in cell cycle arrest and apoptosis through direct interaction, preventing its MDM2-dependent ubiquitin-mediated proteasomal degradation. Originally identified as a tumor suppressor, it may also play a role in cell proliferation and apoptosis by positively regulating the stability of PTEN, thereby antagonizing the PI3K-AKT/PKB signaling pathway. May also inhibit cell proliferation and increase apoptosis through its interaction with NF2. May negatively regulate NPM1 by regulating its nucleoplasmic localization, oligomerization and ubiquitin-mediated proteasomal degradation. Thereby, may prevent NPM1 interaction with MYC and negatively regulate transcription mediated by the MYC-NPM1 complex. May also regulate cellular aerobic respiration. In the cellular response to viral infection, may play a role in the attenuation of interferon-beta through the inhibition of RIGI. This is Ribosome biogenesis protein NOP53 from Homo sapiens (Human).